Reading from the N-terminus, the 338-residue chain is Hydroxyproline O-galactosyltransferase HPGT1 (338 aa).

At 1–12 (MARKGSSIRLSS) the chain is on the cytoplasmic side. A helical; Signal-anchor for type II membrane protein transmembrane segment spans residues 13–32 (SRISTLLLFMFATFASFYVA). At 33 to 338 (GRLWQESQTR…WSSEAICAGV (306 aa)) the chain is on the lumenal side.

Belongs to the glycosyltransferase 31 family. Mn(2+) is required as a cofactor. In terms of tissue distribution, expressed in roots, rosette leaves, cauline leaves, stems, flowers and siliques.

It is found in the golgi apparatus membrane. Its pathway is protein modification; protein glycosylation. In terms of biological role, possesses hydroxyproline O-galactosyltransferase activity. Transfers galactose from UDP-galactose to hydroxyproline residues in the arabinogalactan proteins (AGPs). Is specific for AGPs containing non-contiguous peptidyl hydroxyproline residues. The addition of galactose onto the peptidyl hydroxyproline residues in AGP core proteins represents the first committed step in arabinogalactan polysaccharide addition. AGP glycans play essential roles in both vegetative and reproductive plant growth. The protein is Hydroxyproline O-galactosyltransferase HPGT1 of Arabidopsis thaliana (Mouse-ear cress).